Reading from the N-terminus, the 385-residue chain is Tryptophan--tRNA ligase (385 aa).

Positions 82-90 (PSGPMHIGH) match the 'HIGH' region motif. The 'KMSKS' region signature appears at 253–257 (KMSAS).

This sequence belongs to the class-I aminoacyl-tRNA synthetase family.

It is found in the cytoplasm. It carries out the reaction tRNA(Trp) + L-tryptophan + ATP = L-tryptophyl-tRNA(Trp) + AMP + diphosphate + H(+). The polypeptide is Tryptophan--tRNA ligase (Pyrococcus furiosus (strain ATCC 43587 / DSM 3638 / JCM 8422 / Vc1)).